Reading from the N-terminus, the 213-residue chain is Octanoyltransferase (213 aa).

The 176-residue stretch at 32-207 folds into the BPL/LPL catalytic domain; sequence DSTLDEIWLV…NILALLNNPD (176 aa). Residues 71–78, 138–140, and 151–153 contribute to the substrate site; these read RGGQVTYH, SLG, and GLA. Cysteine 169 functions as the Acyl-thioester intermediate in the catalytic mechanism.

This sequence belongs to the LipB family.

It is found in the cytoplasm. The enzyme catalyses octanoyl-[ACP] + L-lysyl-[protein] = N(6)-octanoyl-L-lysyl-[protein] + holo-[ACP] + H(+). It functions in the pathway protein modification; protein lipoylation via endogenous pathway; protein N(6)-(lipoyl)lysine from octanoyl-[acyl-carrier-protein]: step 1/2. Catalyzes the transfer of endogenously produced octanoic acid from octanoyl-acyl-carrier-protein onto the lipoyl domains of lipoate-dependent enzymes. Lipoyl-ACP can also act as a substrate although octanoyl-ACP is likely to be the physiological substrate. The protein is Octanoyltransferase of Escherichia coli O8 (strain IAI1).